The primary structure comprises 652 residues: Tetracycline resistance protein TetP (652 aa).

The tr-type G domain occupies 2–252 (KKIINIGIVA…CSYFPFASND (251 aa)). GTP contacts are provided by residues 11-18 (AHVDAGKT), 75-79 (DTPGH), and 129-132 (NKLD).

Belongs to the TRAFAC class translation factor GTPase superfamily. Classic translation factor GTPase family. TetM/TetO subfamily.

Functionally, abolishes the inhibitory effect of tetracyclin on protein synthesis by a non-covalent modification of the ribosomes. The sequence is that of Tetracycline resistance protein TetP (tetP) from Clostridium perfringens.